The primary structure comprises 127 residues: MERITSLVFFASFLIIFVSGVNQTRADSCDESLGLCETCDERCQAKHGPSCISKCDGEVGMLSCTCTYECGPPLPPKGNVCSGGTGMCSGKCPYKCCDTSCAQKYNGGRGFCNSFGNYNFCQCEYPC.

The N-terminal stretch at Met1–Ala26 is a signal peptide. 8 disulfides stabilise this stretch: Cys29–Cys70, Cys36–Cys55, Cys39–Cys64, Cys43–Cys66, Cys81–Cys127, Cys92–Cys112, Cys97–Cys121, and Cys101–Cys123.

It belongs to the DEFL family.

It localises to the secreted. This is Putative defensin-like protein 180 (LCR58) from Arabidopsis thaliana (Mouse-ear cress).